The following is a 287-amino-acid chain: Inorganic pyrophosphatase (287 aa).

Diphosphate is bound at residue Arg-79. The Mg(2+) site is built by Asp-116, Asp-121, and Asp-153.

The protein belongs to the PPase family. The cofactor is Mg(2+).

The protein localises to the cytoplasm. The catalysed reaction is diphosphate + H2O = 2 phosphate + H(+). This Zygosaccharomyces bailii protein is Inorganic pyrophosphatase (IPP1).